The chain runs to 715 residues: Polyribonucleotide nucleotidyltransferase (715 aa).

Residues Asp493 and Asp499 each contribute to the Mg(2+) site. Positions 560–619 (PRMITVKINPEKIRDVIGKGGSVIRALTEETGTTIDISDDGVVTIASTSSEGMAEAKKRI) constitute a KH domain. The S1 motif domain maps to 629–697 (GQVYEGTVLK…EKGRVRLSAK (69 aa)).

Belongs to the polyribonucleotide nucleotidyltransferase family. The cofactor is Mg(2+).

It localises to the cytoplasm. It carries out the reaction RNA(n+1) + phosphate = RNA(n) + a ribonucleoside 5'-diphosphate. In terms of biological role, involved in mRNA degradation. Catalyzes the phosphorolysis of single-stranded polyribonucleotides processively in the 3'- to 5'-direction. This Burkholderia cenocepacia (strain HI2424) protein is Polyribonucleotide nucleotidyltransferase.